The following is a 49-amino-acid chain: Agglutinin-1 (49 aa).

As to quaternary structure, homooligomer. Glycosylated.

In terms of biological role, beta-galactoside specific lectin. Has a hemagglutinating activity on erythrocytes. The polypeptide is Agglutinin-1 (Pomacea flagellata (Apple snail)).